Consider the following 1171-residue polypeptide: Zinc finger BED domain-containing protein 4 (1171 aa).

Positions 25–62 (EEEDDDGIPPDSLERMDFKSEQEDMKQTDSGGERAGLG) are disordered. Positions 36-51 (SLERMDFKSEQEDMKQ) are enriched in basic and acidic residues. K43 is covalently cross-linked (Glycyl lysine isopeptide (Lys-Gly) (interchain with G-Cter in SUMO2)). 2 BED-type zinc fingers span residues 115-172 (RKKS…LIQE) and 285-342 (RRRS…VLQE). Residues C136, C139, H160, H165, C306, C309, H330, and H335 each coordinate Zn(2+). Positions 362–385 (LLPPEGELSSVSSSPVKPVRESPS) are enriched in low complexity. Residues 362–405 (LLPPEGELSSVSSSPVKPVRESPSASSSPDRLTEDLQSHLNPGD) form a disordered region. 2 BED-type zinc fingers span residues 456–512 (RLKS…VGSQ) and 558–615 (KKTS…LKTE). The Zn(2+) site is built by C477 and C480. K489 is covalently cross-linked (Glycyl lysine isopeptide (Lys-Gly) (interchain with G-Cter in SUMO2)). Residues H500, H505, C579, C582, H603, and H608 each contribute to the Zn(2+) site. Positions 614 to 640 (TEVSETARPSSPDTRVPRGTELSGASS) are disordered. S624 is subject to Phosphoserine. Positions 1086-1171 (LAYLEEEVLE…VNLPLIYFQY (86 aa)) are required for homodimerization and nuclear accumulation.

As to quaternary structure, homodimer; via C-terminus. Interacts with MYH9. Interacts with SAFB/SAFB1. Expressed in testis, heart, lung, and weakly expressed in brain, liver, muscle, placenta and small intestine. Expressed in the retina, found in the cone photoreceptors, Mueller cells, cone pedicles and in the innermost retinal layer.

The protein resides in the nucleus. The protein localises to the cytoplasm. It is found in the photoreceptor inner segment. In terms of biological role, transcriptional regulator that binds to poly-guanine tracts in gene promoters and activates transcription. Able to bind single- and double-stranded DNA and RNA. This Homo sapiens (Human) protein is Zinc finger BED domain-containing protein 4 (ZBED4).